Reading from the N-terminus, the 137-residue chain is Histone H2B (137 aa).

Positions 1–10 (MPPKPADKKP) are enriched in basic and acidic residues. The segment at 1 to 45 (MPPKPADKKPASKAPATASKAPEKKDAGKKTAASGDKKKRTKARK) is disordered. 2 positions are modified to N6-acetyllysine; alternate: K8 and K9. Glycyl lysine isopeptide (Lys-Gly) (interchain with G-Cter in SUMO); alternate cross-links involve residues K8 and K9. Phosphoserine is present on S12. K13 carries the post-translational modification N6-acetyllysine. K24 carries the N6-acetyllysine; alternate modification. A Glycyl lysine isopeptide (Lys-Gly) (interchain with G-Cter in SUMO); alternate cross-link involves residue K24. Residue K25 forms a Glycyl lysine isopeptide (Lys-Gly) (interchain with G-Cter in SUMO) linkage. Residue K131 forms a Glycyl lysine isopeptide (Lys-Gly) (interchain with G-Cter in ubiquitin) linkage.

This sequence belongs to the histone H2B family. As to quaternary structure, the nucleosome is a histone octamer containing two molecules each of H2A, H2B, H3 and H4 assembled in one H3-H4 heterotetramer and two H2A-H2B heterodimers. The octamer wraps approximately 147 bp of DNA. Post-translationally, monoubiquitinated by the ubc-2-bre-1 complex to form H2BK123ub1. H2BK123ub1 gives a specific tag for epigenetic transcriptional activation and is also prerequisite for H3K4me and H3K79me formation. H2BK123ub1 also modulates the formation of double-strand breaks during meiosis and is a prerequisite for DNA-damage checkpoint activation. In terms of processing, phosphorylated by ste-20 to form H2BS10ph during progression through meiotic prophase. May be correlated with chromosome condensation. Acetylated by gcn-5 to form H2BK11ac and H2BK16ac. H2BK16ac can also be formed by esa-1. Acetylation of N-terminal lysines and particularly formation of H2BK11acK16ac has a positive effect on transcription. Post-translationally, sumoylation to form H2BK6su or H2BK7su, and probably also H2BK16su or H2BK17su, occurs preferentially near the telomeres and represses gene transcription.

It localises to the nucleus. Its subcellular location is the chromosome. Its function is as follows. Core component of nucleosome. Nucleosomes wrap and compact DNA into chromatin, limiting DNA accessibility to the cellular machineries which require DNA as a template. Histones thereby play a central role in transcription regulation, DNA repair, DNA replication and chromosomal stability. DNA accessibility is regulated via a complex set of post-translational modifications of histones, also called histone code, and nucleosome remodeling. The chain is Histone H2B (hh2b) from Neurospora crassa (strain ATCC 24698 / 74-OR23-1A / CBS 708.71 / DSM 1257 / FGSC 987).